A 93-amino-acid polypeptide reads, in one-letter code: Small ribosomal subunit protein bS20 (93 aa).

Residues Lys72 to Ser93 are disordered. Over residues Thr74 to Arg84 the composition is skewed to basic residues.

This sequence belongs to the bacterial ribosomal protein bS20 family.

Its function is as follows. Binds directly to 16S ribosomal RNA. This Carboxydothermus hydrogenoformans (strain ATCC BAA-161 / DSM 6008 / Z-2901) protein is Small ribosomal subunit protein bS20.